A 433-amino-acid polypeptide reads, in one-letter code: Epi-neemfruitin B synthase L1AT (433 aa).

Active-site proton acceptor residues include His-151 and Asp-372.

It belongs to the plant acyltransferase family. Monomer. Mainly expressed in petioles and, to a lower extent, in roots.

The enzyme catalyses (21S)-21-acetyl-1-hydroxy-apo-melianone + acetyl-CoA = epi-neemfruitin B + acetate + CoA + H(+). It functions in the pathway secondary metabolite biosynthesis; terpenoid biosynthesis. Acetyltransferase involved in the biosynthesis of limonoids triterpene natural products such as azadirachtin, an antifeedant widely used as bioinsecticide, and possessing many medicinal applications including anti-tumoral, anti-malarial, anti-rheumatic, antibacterial, anti-inflammatory, anti-pyretic and diuretic effects. Catalyzes the formation of epi-neemfruitin B from (21S)-21-acetyl-1-hydroxy-apo-melianone. This chain is Epi-neemfruitin B synthase L1AT, found in Melia azedarach (Chinaberry tree).